The following is a 484-amino-acid chain: Threonine synthase-like 2 (484 aa).

Position 113 is an N6-(pyridoxal phosphate)lysine (Lys113).

Belongs to the threonine synthase family. Requires pyridoxal 5'-phosphate as cofactor.

Its subcellular location is the secreted. Its function is as follows. Acts as a catabolic phospho-lyase on both gamma- and beta-phosphorylated substrates. Degrades O-phospho-threonine (PThr) to alpha-ketobutyrate, ammonia and phosphate. Functionally, potent inducer of osteoblastic production of IL6. May act to exacerbate inflammation and/or bone turnover under inflammatory conditions. This Homo sapiens (Human) protein is Threonine synthase-like 2 (THNSL2).